A 142-amino-acid polypeptide reads, in one-letter code: Hemoglobin subunit alpha-1 (142 aa).

The Globin domain maps to valine 2–arginine 142. O2 is bound at residue histidine 59. Heme b is bound at residue histidine 88.

The protein belongs to the globin family. In terms of assembly, heterotetramer of two alpha chains and two beta chains. In terms of tissue distribution, red blood cells.

Involved in oxygen transport from the lung to the various peripheral tissues. The polypeptide is Hemoglobin subunit alpha-1 (Arctocephalus galapagoensis (Galapagoes fur seal)).